The chain runs to 163 residues: 2-C-methyl-D-erythritol 2,4-cyclodiphosphate synthase (163 aa).

Positions 9 and 11 each coordinate a divalent metal cation. 4-CDP-2-C-methyl-D-erythritol 2-phosphate-binding positions include 9-11 (DVH) and 36-37 (HS). Residue H44 participates in a divalent metal cation binding. 4-CDP-2-C-methyl-D-erythritol 2-phosphate-binding positions include 58 to 60 (DIG), 63 to 67 (FPDDD), 134 to 137 (TTSE), F141, and R144.

It belongs to the IspF family. Homotrimer. Requires a divalent metal cation as cofactor.

It catalyses the reaction 4-CDP-2-C-methyl-D-erythritol 2-phosphate = 2-C-methyl-D-erythritol 2,4-cyclic diphosphate + CMP. Its pathway is isoprenoid biosynthesis; isopentenyl diphosphate biosynthesis via DXP pathway; isopentenyl diphosphate from 1-deoxy-D-xylulose 5-phosphate: step 4/6. Its function is as follows. Involved in the biosynthesis of isopentenyl diphosphate (IPP) and dimethylallyl diphosphate (DMAPP), two major building blocks of isoprenoid compounds. Catalyzes the conversion of 4-diphosphocytidyl-2-C-methyl-D-erythritol 2-phosphate (CDP-ME2P) to 2-C-methyl-D-erythritol 2,4-cyclodiphosphate (ME-CPP) with a corresponding release of cytidine 5-monophosphate (CMP). The polypeptide is 2-C-methyl-D-erythritol 2,4-cyclodiphosphate synthase (Halorhodospira halophila (strain DSM 244 / SL1) (Ectothiorhodospira halophila (strain DSM 244 / SL1))).